Consider the following 336-residue polypeptide: MSYDEKHLMEGIYREKSGDKFIYYYFDNNEEVTTKDIERINKLRIPPAWTNVWVARDPNSPIQAIGTDSKGRKQYRYNEIHIQGAEKEKFKRLYDFIKSIPKLEKAMVRDNNFPFYNKNRVISLMLQMVRDYNMRVGKEVYARQNKSYGISSLRKKHVKISPGVITLNFKGKSGQRLNYTIRNDFYIDGIKMLMKLEGDRLFQYISTDEDGNEKIMRVNDRDLNKYIQENMGSEFTIKDFRTFGANLYFIQALLSETRKRTPKNRKTIKKNIANAFKSTARQLKHTGAVSKKSYVMNYTLELYQNNPEFFIEHKNDDPIDFLLRILKSYRKDVLGE.

The region spanning 79–336 (EIHIQGAEKE…KSYRKDVLGE (258 aa)) is the Topo IB-type catalytic domain. Tyrosine 294 acts as the O-(3'-phospho-DNA)-tyrosine intermediate in catalysis.

Belongs to the type IB topoisomerase family. In terms of assembly, monomer.

The protein localises to the virion. It carries out the reaction ATP-independent breakage of single-stranded DNA, followed by passage and rejoining.. Functionally, releases the supercoiling and torsional tension of DNA introduced during the DNA replication and transcription by transiently cleaving and rejoining one strand of the DNA duplex. Introduces a single-strand break via transesterification at a target site in duplex DNA. The scissile phosphodiester is attacked by the catalytic tyrosine of the enzyme, resulting in the formation of a DNA-(3'-phosphotyrosyl)-enzyme intermediate and the expulsion of a 5'-OH DNA strand. The free DNA strand then undergoes passage around the unbroken strand thus removing DNA supercoils. Finally, in the religation step, the DNA 5'-OH attacks the covalent intermediate to expel the active-site tyrosine and restore the DNA phosphodiester backbone. Cleaves DNA after CCCTT sequence. The chain is DNA topoisomerase 1B (TOP1E) from Acanthamoeba polyphaga mimivirus (APMV).